The following is a 262-amino-acid chain: Fibroin light chain (262 aa).

The signal sequence occupies residues 1 to 16; the sequence is MKPIFLVLLVATSAYA. Ser-19 carries the N-acetylserine; in short form modification. A disulfide bridge connects residues Cys-101 and Cys-160.

As to quaternary structure, silk fibroin elementary unit consists in a disulfide-linked heavy and light chain and a p25 glycoprotein in molar ratios of 6:6:1. This results in a complex of approximately 2.3 MDa. In terms of processing, the interchain disulfide bridge is essential for the intracellular transport and secretion of fibroin. Partially N-terminally processed to yield a short form which lacks the first two residues of the long form. As to expression, produced exclusively in the posterior (PSG) section of silk glands, which are essentially modified salivary glands.

The protein localises to the secreted. Functionally, it is likely that the major role of L-chain is to prevent the retention of H-chain in ER by forming the disulfide linkage. In Bombyx mori (Silk moth), this protein is Fibroin light chain (FIBL).